A 1407-amino-acid chain; its full sequence is DNA-directed RNA polymerase subunit beta' (1407 aa).

Residues Cys-70, Cys-72, Cys-85, and Cys-88 each contribute to the Zn(2+) site. Asp-460, Asp-462, and Asp-464 together coordinate Mg(2+). 4 residues coordinate Zn(2+): Cys-814, Cys-888, Cys-895, and Cys-898.

It belongs to the RNA polymerase beta' chain family. In terms of assembly, the RNAP catalytic core consists of 2 alpha, 1 beta, 1 beta' and 1 omega subunit. When a sigma factor is associated with the core the holoenzyme is formed, which can initiate transcription. It depends on Mg(2+) as a cofactor. Requires Zn(2+) as cofactor.

The enzyme catalyses RNA(n) + a ribonucleoside 5'-triphosphate = RNA(n+1) + diphosphate. DNA-dependent RNA polymerase catalyzes the transcription of DNA into RNA using the four ribonucleoside triphosphates as substrates. This Buchnera aphidicola subsp. Acyrthosiphon pisum (strain APS) (Acyrthosiphon pisum symbiotic bacterium) protein is DNA-directed RNA polymerase subunit beta'.